The sequence spans 318 residues: 5'-3' exonuclease (318 aa).

The 5'-3' exonuclease domain occupies 194–278 (AYAELALLRG…ATDAPVTLST (85 aa)).

Its function is as follows. 5'-3' exonuclease acting preferentially on double-stranded DNA. In Mycobacterium tuberculosis (strain ATCC 25618 / H37Rv), this protein is 5'-3' exonuclease.